The sequence spans 205 residues: Small ribosomal subunit protein uS4 (205 aa).

A disordered region spans residues 20 to 47 (WGRSKSPLNRGKENPPGQHGQRRKKPSD). Residues 94–154 (CRLDAVVYRL…TKSKDMALIL (61 aa)) enclose the S4 RNA-binding domain.

It belongs to the universal ribosomal protein uS4 family. As to quaternary structure, part of the 30S ribosomal subunit. Contacts protein S5. The interaction surface between S4 and S5 is involved in control of translational fidelity.

Functionally, one of the primary rRNA binding proteins, it binds directly to 16S rRNA where it nucleates assembly of the body of the 30S subunit. With S5 and S12 plays an important role in translational accuracy. This chain is Small ribosomal subunit protein uS4, found in Paramagnetospirillum magneticum (strain ATCC 700264 / AMB-1) (Magnetospirillum magneticum).